Consider the following 67-residue polypeptide: uncharacterized protein (67 aa).

A helical membrane pass occupies residues 26–46 (CYLLFCFLECFLNLFKKCGVF).

This sequence belongs to the plectrovirus ORF11 family.

Its subcellular location is the host membrane. This is an uncharacterized protein from Spiroplasma virus SpV1-C74 (SpV1).